Consider the following 411-residue polypeptide: Serine--tRNA ligase (411 aa).

226–228 (TSE) is a binding site for L-serine. 257-259 (RKE) lines the ATP pocket. Glu-280 is a binding site for L-serine. 344–347 (EISS) provides a ligand contact to ATP. Ser-379 is a binding site for L-serine.

This sequence belongs to the class-II aminoacyl-tRNA synthetase family. Type-1 seryl-tRNA synthetase subfamily. Homodimer. The tRNA molecule binds across the dimer.

The protein localises to the cytoplasm. The enzyme catalyses tRNA(Ser) + L-serine + ATP = L-seryl-tRNA(Ser) + AMP + diphosphate + H(+). It catalyses the reaction tRNA(Sec) + L-serine + ATP = L-seryl-tRNA(Sec) + AMP + diphosphate + H(+). Its pathway is aminoacyl-tRNA biosynthesis; selenocysteinyl-tRNA(Sec) biosynthesis; L-seryl-tRNA(Sec) from L-serine and tRNA(Sec): step 1/1. Catalyzes the attachment of serine to tRNA(Ser). Is also able to aminoacylate tRNA(Sec) with serine, to form the misacylated tRNA L-seryl-tRNA(Sec), which will be further converted into selenocysteinyl-tRNA(Sec). This Campylobacter jejuni subsp. jejuni serotype O:23/36 (strain 81-176) protein is Serine--tRNA ligase.